The chain runs to 350 residues: Pleckstrin (350 aa).

The region spanning Lys4 to Lys101 is the PH 1 domain. An N6-acetyllysine modification is found at Lys64. Phosphoserine; by PKC occurs at positions 113 and 117. Residues Thr136 to Asp221 form the DEP domain. Residues Val244–Arg347 enclose the PH 2 domain.

Functionally, major protein kinase C substrate of platelets. The polypeptide is Pleckstrin (PLEK) (Homo sapiens (Human)).